Consider the following 161-residue polypeptide: Endoribonuclease YbeY (161 aa).

Residues histidine 121, histidine 125, and histidine 131 each coordinate Zn(2+).

It belongs to the endoribonuclease YbeY family. Requires Zn(2+) as cofactor.

It localises to the cytoplasm. Single strand-specific metallo-endoribonuclease involved in late-stage 70S ribosome quality control and in maturation of the 3' terminus of the 16S rRNA. This chain is Endoribonuclease YbeY, found in Stenotrophomonas maltophilia (strain R551-3).